We begin with the raw amino-acid sequence, 119 residues long: Ribosome-binding factor A (119 aa).

This sequence belongs to the RbfA family. Monomer. Binds 30S ribosomal subunits, but not 50S ribosomal subunits or 70S ribosomes.

The protein resides in the cytoplasm. Functionally, one of several proteins that assist in the late maturation steps of the functional core of the 30S ribosomal subunit. Associates with free 30S ribosomal subunits (but not with 30S subunits that are part of 70S ribosomes or polysomes). Required for efficient processing of 16S rRNA. May interact with the 5'-terminal helix region of 16S rRNA. The protein is Ribosome-binding factor A of Chlorobium limicola (strain DSM 245 / NBRC 103803 / 6330).